A 226-amino-acid chain; its full sequence is Small ribosomal subunit protein uS3 (226 aa).

The KH type-2 domain maps to Ile-39 to Thr-109.

This sequence belongs to the universal ribosomal protein uS3 family. As to quaternary structure, part of the 30S ribosomal subunit. Forms a tight complex with proteins S10 and S14.

Functionally, binds the lower part of the 30S subunit head. Binds mRNA in the 70S ribosome, positioning it for translation. This is Small ribosomal subunit protein uS3 from Mycoplasmopsis synoviae (strain 53) (Mycoplasma synoviae).